The primary structure comprises 264 residues: Nicotinamide N-methyltransferase (264 aa).

Arg18 is modified (citrulline; alternate). S-adenosyl-L-methionine-binding residues include Tyr20 and Tyr25. Position 39 is an N6-acetyllysine (Lys39). S-adenosyl-L-methionine contacts are provided by Gly63, Tyr69, Asp85, and Asn90. Arg132 is subject to Citrulline; alternate. Residues 142–143 and Thr163 each bind S-adenosyl-L-methionine; that span reads DV. Residue Arg181 is modified to Citrulline; alternate. Nicotinamide is bound by residues Asp197 and Ser213.

The protein belongs to the class I-like SAM-binding methyltransferase superfamily. NNMT/PNMT/TEMT family. Monomer. Post-translationally, deiminated by PADI1 and PADI2. As to expression, predominantly expressed in the liver. A lower expression is seen in the kidney, lung, skeletal muscle, placenta and heart. Not detected in the brain or pancreas.

It is found in the cytoplasm. It carries out the reaction nicotinamide + S-adenosyl-L-methionine = 1-methylnicotinamide + S-adenosyl-L-homocysteine. It participates in cofactor metabolism. Its pathway is amino-acid degradation. Inactivated by deimination on Arg-132. In terms of biological role, catalyzes the N-methylation of nicotinamide using the universal methyl donor S-adenosyl-L-methionine to form N1-methylnicotinamide and S-adenosyl-L-homocysteine, a predominant nicotinamide/vitamin B3 clearance pathway. Plays a central role in regulating cellular methylation potential, by consuming S-adenosyl-L-methionine and limiting its availability for other methyltransferases. Actively mediates genome-wide epigenetic and transcriptional changes through hypomethylation of repressive chromatin marks, such as H3K27me3. In a developmental context, contributes to low levels of the repressive histone marks that characterize pluripotent embryonic stem cell pre-implantation state. Acts as a metabolic regulator primarily on white adipose tissue energy expenditure as well as hepatic gluconeogenesis and cholesterol biosynthesis. In white adipocytes, regulates polyamine flux by consuming S-adenosyl-L-methionine which provides for propylamine group in polyamine biosynthesis, whereas by consuming nicotinamide controls NAD(+) levels through the salvage pathway. Via its product N1-methylnicotinamide regulates protein acetylation in hepatocytes, by repressing the ubiquitination and increasing the stability of SIRT1 deacetylase. Can also N-methylate other pyridines structurally related to nicotinamide and play a role in xenobiotic detoxification. The protein is Nicotinamide N-methyltransferase of Homo sapiens (Human).